We begin with the raw amino-acid sequence, 106 residues long: Thiosulfate sulfurtransferase GlpE (106 aa).

The region spanning 16–104 (REQGAVLVDV…WRTTYPQETV (89 aa)) is the Rhodanese domain. Cys-64 serves as the catalytic Cysteine persulfide intermediate.

Belongs to the GlpE family.

The protein resides in the cytoplasm. It catalyses the reaction thiosulfate + hydrogen cyanide = thiocyanate + sulfite + 2 H(+). The enzyme catalyses thiosulfate + [thioredoxin]-dithiol = [thioredoxin]-disulfide + hydrogen sulfide + sulfite + 2 H(+). In terms of biological role, transferase that catalyzes the transfer of sulfur from thiosulfate to thiophilic acceptors such as cyanide or dithiols. May function in a CysM-independent thiosulfate assimilation pathway by catalyzing the conversion of thiosulfate to sulfite, which can then be used for L-cysteine biosynthesis. This chain is Thiosulfate sulfurtransferase GlpE, found in Pseudomonas syringae pv. syringae (strain B728a).